The sequence spans 100 residues: uncharacterized protein (100 aa).

This is an uncharacterized protein from Homo sapiens (Human).